The primary structure comprises 114 residues: MVDLMTVIMVRYSLFLTWELVLLQLLLLRLSFHVSRTKILVLVRISIILHHDENAYTQSQYNLYTGPLTLRFLQRVYYMHFHIYIFNAIPLRYVKKNDPMSGPSYEMRYNKNER.

This is an uncharacterized protein from Saccharomyces cerevisiae (strain ATCC 204508 / S288c) (Baker's yeast).